The sequence spans 331 residues: Retinol dehydrogenase 13 (331 aa).

Ser-2 carries the post-translational modification N-acetylserine. 45–51 serves as a coordination point for NADP(+); it reads GANTGIG. Ser-174 contributes to the substrate binding site. Tyr-200 serves as the catalytic Proton acceptor. Position 323 is a phosphoserine (Ser-323).

Belongs to the short-chain dehydrogenases/reductases (SDR) family. Widely expressed. In the retina, detected in the inner segment of the photoreceptor cells. Weak signals are observed in a small population of inner nuclear neurons and the inner plexiform layer.

The protein localises to the mitochondrion inner membrane. The enzyme catalyses all-trans-retinol + NADP(+) = all-trans-retinal + NADPH + H(+). It participates in cofactor metabolism; retinol metabolism. In terms of biological role, retinol dehydrogenase with a clear preference for NADP. Oxidizes all-trans-retinol, but seems to reduce all-trans-retinal with much higher efficiency. Has no activity toward steroids. This chain is Retinol dehydrogenase 13 (RDH13), found in Homo sapiens (Human).